The primary structure comprises 163 residues: Ribosome maturation factor RimM (163 aa).

In terms of domain architecture, PRC barrel spans 90–161; sequence EGRHYWGDLE…VVVDPPEGLL (72 aa).

It belongs to the RimM family. In terms of assembly, binds ribosomal protein uS19.

Its subcellular location is the cytoplasm. An accessory protein needed during the final step in the assembly of 30S ribosomal subunit, possibly for assembly of the head region. Essential for efficient processing of 16S rRNA. May be needed both before and after RbfA during the maturation of 16S rRNA. It has affinity for free ribosomal 30S subunits but not for 70S ribosomes. This is Ribosome maturation factor RimM from Anaeromyxobacter dehalogenans (strain 2CP-C).